A 343-amino-acid polypeptide reads, in one-letter code: Phosphate acyltransferase (343 aa).

This sequence belongs to the PlsX family. In terms of assembly, homodimer. Probably interacts with PlsY.

Its subcellular location is the cytoplasm. It carries out the reaction a fatty acyl-[ACP] + phosphate = an acyl phosphate + holo-[ACP]. It participates in lipid metabolism; phospholipid metabolism. Catalyzes the reversible formation of acyl-phosphate (acyl-PO(4)) from acyl-[acyl-carrier-protein] (acyl-ACP). This enzyme utilizes acyl-ACP as fatty acyl donor, but not acyl-CoA. The sequence is that of Phosphate acyltransferase from Coxiella burnetii (strain CbuG_Q212) (Coxiella burnetii (strain Q212)).